Here is a 61-residue protein sequence, read N- to C-terminus: Small ribosomal subunit protein uS14 (61 aa).

Residues C24, C27, C40, and C43 each coordinate Zn(2+).

It belongs to the universal ribosomal protein uS14 family. Zinc-binding uS14 subfamily. Part of the 30S ribosomal subunit. Contacts proteins S3 and S10. Zn(2+) is required as a cofactor.

Its function is as follows. Binds 16S rRNA, required for the assembly of 30S particles and may also be responsible for determining the conformation of the 16S rRNA at the A site. The protein is Small ribosomal subunit protein uS14 of Natranaerobius thermophilus (strain ATCC BAA-1301 / DSM 18059 / JW/NM-WN-LF).